The primary structure comprises 499 residues: Lysine--tRNA ligase (499 aa).

Residues Glu-403 and Glu-410 each contribute to the Mg(2+) site.

The protein belongs to the class-II aminoacyl-tRNA synthetase family. Homodimer. The cofactor is Mg(2+).

It is found in the cytoplasm. The catalysed reaction is tRNA(Lys) + L-lysine + ATP = L-lysyl-tRNA(Lys) + AMP + diphosphate. This is Lysine--tRNA ligase from Campylobacter hominis (strain ATCC BAA-381 / DSM 21671 / CCUG 45161 / LMG 19568 / NCTC 13146 / CH001A).